We begin with the raw amino-acid sequence, 478 residues long: Solute carrier family 49 member 4 (478 aa).

Residues 1 to 27 form a disordered region; the sequence is MGSGWSSEEEERQPLLGPGLGPAPGAA. Topologically, residues 1–51 are cytoplasmic; sequence MGSGWSSEEEERQPLLGPGLGPAPGAARRGREATAVLPAAGPNPGRVYGRR. A Di-leucine motif; mediates lysosomal localization motif is present at residues 15–16; sequence LL. A helical transmembrane segment spans residues 52 to 72; the sequence is WLVLLLFSLLAFAQGLVWNTW. The Lumenal segment spans residues 73–89; the sequence is GPIQNSARQAYGFSGWD. A helical membrane pass occupies residues 90–110; the sequence is IALLVLWGPIGFLPCFAFMWL. Over 111–117 the chain is Cytoplasmic; that stretch reads LDKRGLR. Residues 118-138 traverse the membrane as a helical segment; that stretch reads VTVLLTSFLMVLGTGLRCIPV. Topologically, residues 139 to 152 are lumenal; it reads SDLALKKRLIHGGQ. Residues 153–173 form a helical membrane-spanning segment; it reads ILNGLAGPTVMNAAPFLSTTW. Residues 174–184 are Cytoplasmic-facing; it reads FSADERATATA. Residues 185-205 traverse the membrane as a helical segment; it reads IASMLSYLGGACAFLVGPLVV. Residues 206–229 are Lumenal-facing; it reads PAPNGTAPLLAAESSRAHIKDRIE. Asn209 is a glycosylation site (N-linked (GlcNAc...) asparagine). A helical transmembrane segment spans residues 230-250; it reads TVLYAEFGVVCLIFSATLAYF. Over 251 to 281 the chain is Cytoplasmic; the sequence is PPRPPLPPSVAAASQRLSYRRSFCRLLSNLR. A helical membrane pass occupies residues 282 to 302; it reads FLMIALAYAIPLGVFAGWSGV. Residues 303–314 are Lumenal-facing; the sequence is LDLILTPVHVSQ. The chain crosses the membrane as a helical span at residues 315-335; sequence VDAGWIGFWSIVGGCVVGIAM. Residues 336-347 are Cytoplasmic-facing; that stretch reads ARFADFIRGMLK. Residues 348 to 368 form a helical membrane-spanning segment; it reads LILLLLFSGATLSSTWFTLTC. Over 369–384 the chain is Lumenal; sequence LNSITHLPLTTVTLYA. A helical transmembrane segment spans residues 385–405; that stretch reads SCILLGVFLNSSVPIFFELFV. Residues 406–414 lie on the Cytoplasmic side of the membrane; that stretch reads ETVYPVPEG. The helical transmembrane segment at 415 to 435 threads the bilayer; that stretch reads ITCGVVTFLSNMFMGVLLFFV. The Lumenal portion of the chain corresponds to 436–442; it reads TFYHTEL. A helical transmembrane segment spans residues 443 to 463; that stretch reads SWFNWCLPGSCLLSLLLILCF. Over 464–478 the chain is Cytoplasmic; the sequence is RESYDRLYLDVVVSV.

It belongs to the major facilitator superfamily. Post-translationally, cleaved in lysosomes by cathepsin L between Leu-214 and Ala-261, generating a N-glycosylated N-terminal and a non-glycosylated C-terminal fragment.

The protein localises to the lysosome membrane. It carries out the reaction pyridoxine(out) + n H(+)(out) = pyridoxine(in) + n H(+)(in). Its function is as follows. Mediates H(+)-dependent pyridoxine transport. This Mus musculus (Mouse) protein is Solute carrier family 49 member 4 (Slc49a4).